Here is a 150-residue protein sequence, read N- to C-terminus: Large ribosomal subunit protein bL9 (150 aa).

Belongs to the bacterial ribosomal protein bL9 family.

Binds to the 23S rRNA. This is Large ribosomal subunit protein bL9 from Hydrogenovibrio crunogenus (strain DSM 25203 / XCL-2) (Thiomicrospira crunogena).